The following is a 440-amino-acid chain: 3-phosphoshikimate 1-carboxyvinyltransferase (440 aa).

3-phosphoshikimate-binding residues include lysine 29 and arginine 34. Lysine 29 serves as a coordination point for phosphoenolpyruvate. 2 residues coordinate phosphoenolpyruvate: glycine 99 and arginine 128. 3-phosphoshikimate-binding residues include serine 171, serine 172, glutamine 173, serine 199, aspartate 316, and lysine 343. Phosphoenolpyruvate is bound at residue glutamine 173. Aspartate 316 acts as the Proton acceptor in catalysis. Residues arginine 347, arginine 390, and lysine 416 each contribute to the phosphoenolpyruvate site.

The protein belongs to the EPSP synthase family. As to quaternary structure, monomer.

Its subcellular location is the cytoplasm. The catalysed reaction is 3-phosphoshikimate + phosphoenolpyruvate = 5-O-(1-carboxyvinyl)-3-phosphoshikimate + phosphate. Its pathway is metabolic intermediate biosynthesis; chorismate biosynthesis; chorismate from D-erythrose 4-phosphate and phosphoenolpyruvate: step 6/7. Functionally, catalyzes the transfer of the enolpyruvyl moiety of phosphoenolpyruvate (PEP) to the 5-hydroxyl of shikimate-3-phosphate (S3P) to produce enolpyruvyl shikimate-3-phosphate and inorganic phosphate. The protein is 3-phosphoshikimate 1-carboxyvinyltransferase of Deinococcus geothermalis (strain DSM 11300 / CIP 105573 / AG-3a).